Consider the following 494-residue polypeptide: Ribitol 5-phosphate transferase FKRP (494 aa).

Residues 1 to 6 (MRLTRC) are Cytoplasmic-facing. The helical transmembrane segment at 7–29 (WAALAAAIILNLLVFFYVSWLQH) threads the bilayer. Residues 30–494 (QPRNSRARGP…NPALLSLTGG (465 aa)) lie on the Lumenal side of the membrane. The cysteines at positions 168 and 191 are disulfide-linked. 2 N-linked (GlcNAc...) asparagine glycosylation sites follow: asparagine 172 and asparagine 209. Zn(2+) contacts are provided by cysteine 289, cysteine 296, cysteine 317, and cysteine 318. The segment at 289 to 318 (CSKESARCFGTVAGDTPAYLYEGRWTPPCC) is zinc finger loop. The CDP-L-ribitol site is built by glycine 345 and arginine 352. 3 CDP-L-ribitol regions span residues 359–364 (WDYDVD), 437–438 (QD), and 480–482 (NPE). Mg(2+) is bound by residues aspartate 360, aspartate 362, and aspartate 364.

Belongs to the LicD transferase family. In terms of assembly, homodimer; disulfide-linked. Forms a complex composed of FKRP, FKTN/fukutin, and RXYLT1/TMEM5. Also exists as large multimeric protein complexes. May interact with the dystrophin-glycoprotein complex (DGC). Post-translationally, N-glycosylated. As to expression, expressed in the retina, specifically in the inner segments of the photoreceptors, the outer plexiform layers, inner nuclear layers, and ganglion cell layers (at protein level). Expressed at highest levels in brain, lung, heart, kidney and liver.

Its subcellular location is the golgi apparatus membrane. The protein resides in the secreted. It localises to the cell membrane. It is found in the sarcolemma. The protein localises to the rough endoplasmic reticulum. Its subcellular location is the cytoplasm. The enzyme catalyses 3-O-[Rib-ol-P-3-beta-D-GalNAc-(1-&gt;3)-beta-D-GlcNAc-(1-&gt;4)-(O-6-P-alpha-D-Man)]-Thr-[protein] + CDP-L-ribitol = 3-O-[Rib-ol-P-Rib-ol-P-3-beta-D-GalNAc-(1-&gt;3)-beta-D-GlcNAc-(1-&gt;4)-(O-6-P-alpha-D-Man)]-Thr-[protein] + CMP + H(+). The protein operates within protein modification; protein glycosylation. Functionally, catalyzes the transfer of CDP-ribitol to ribitol 5-phosphate previously attached by FKTN/fukutin of to the phosphorylated O-mannosyl trisaccharide (N-acetylgalactosamine-beta-3-N-acetylglucosamine-beta-4-(phosphate-6-)mannose), a carbohydrate structure present in alpha-dystroglycan (DAG1). This constitutes the second step in the formation of the ribose 5-phosphate tandem repeat which links the phosphorylated O-mannosyl trisaccharide to the ligand binding moiety composed of repeats of 3-xylosyl-alpha-1,3-glucuronic acid-beta-1. This is Ribitol 5-phosphate transferase FKRP from Mus musculus (Mouse).